The primary structure comprises 226 residues: MGQKVHPNGIRLGISRPWNATWYANTNEFADNLHSDFQVRKFLNKELRNASVSRIVIDRPAKSVRVTIHTARPGVVIGKKGEDVEKLRKQVSKLTGAPAQINISEVRKPELDSQLVADNIAGQLERRVMFRRAMKRAVQNAIRLGAKGIKVEVSGRLGGAEIARTEWYREGRVPLHTLRADIDYSTSEANTTYGIIGVKVWIFRGEVLGGLPTEEKPAPKRGKNRK.

The 69-residue stretch at 39–107 (VRKFLNKELR…PAQINISEVR (69 aa)) folds into the KH type-2 domain.

The protein belongs to the universal ribosomal protein uS3 family. As to quaternary structure, part of the 30S ribosomal subunit. Forms a tight complex with proteins S10 and S14.

Its function is as follows. Binds the lower part of the 30S subunit head. Binds mRNA in the 70S ribosome, positioning it for translation. This Idiomarina loihiensis (strain ATCC BAA-735 / DSM 15497 / L2-TR) protein is Small ribosomal subunit protein uS3.